The chain runs to 418 residues: Glucose-1-phosphate adenylyltransferase (418 aa).

Alpha-D-glucose 1-phosphate is bound by residues Y104, G169, 184–185 (EK), and S202.

It belongs to the bacterial/plant glucose-1-phosphate adenylyltransferase family. As to quaternary structure, homotetramer.

The enzyme catalyses alpha-D-glucose 1-phosphate + ATP + H(+) = ADP-alpha-D-glucose + diphosphate. It participates in glycan biosynthesis; glycogen biosynthesis. Functionally, involved in the biosynthesis of ADP-glucose, a building block required for the elongation reactions to produce glycogen. Catalyzes the reaction between ATP and alpha-D-glucose 1-phosphate (G1P) to produce pyrophosphate and ADP-Glc. The sequence is that of Glucose-1-phosphate adenylyltransferase from Jannaschia sp. (strain CCS1).